The primary structure comprises 35 residues: Malate dehydrogenase, mitochondrial (35 aa).

Asparagine 7 provides a ligand contact to NAD(+). Arginine 23 provides a ligand contact to substrate.

Belongs to the LDH/MDH superfamily. MDH type 1 family. Homodimer.

The protein resides in the mitochondrion matrix. The enzyme catalyses (S)-malate + NAD(+) = oxaloacetate + NADH + H(+). This chain is Malate dehydrogenase, mitochondrial, found in Capsicum annuum var. annuum (Red pepper).